Here is a 295-residue protein sequence, read N- to C-terminus: Trimeric intracellular cation channel type A (295 aa).

The Lumenal segment spans residues 1 to 18 (MELLSALSLGELALSFSR). A helical membrane pass occupies residues 19–39 (VPLFPVFDLSYFIVSILYLKY). At 40–51 (EPGAVELSRRHP) the chain is on the cytoplasmic side. Residues 52-72 (VASWLCAMLHCFGSYILADLL) traverse the membrane as a helical segment. Topologically, residues 73 to 85 (LGEPLIDYFSNNS) are lumenal. Gly-74 lines the Ca(2+) pocket. A helical membrane pass occupies residues 86-106 (SILLASAVWYLIFFCPLDLFY). Over 107–144 (KCVCFLPVKLIFVAMKEVVRVRKIAVGIHHAHHHYHHG) the chain is Cytoplasmic. Residues Lys-122 and Arg-126 each contribute to the a 1,2-diacyl-sn-glycero-3-phospho-(1D-myo-inositol-4,5-bisphosphate) site. Residues 145–165 (WFIMIATGWVKGSGVALLSNV) traverse the membrane as a helical segment. Residues 166 to 178 (EQLLRGVWKPETN) are Lumenal-facing. The helical transmembrane segment at 179 to 199 (EILHMSFPTKASLYGAILFTL) threads the bilayer. At 200–209 (QQTRWLPVSK) the chain is on the cytoplasmic side. A helical membrane pass occupies residues 210–230 (ASLIFIFTMFMVSCKVFLTAT). At 231–234 (HSHS) the chain is on the lumenal side. A helical membrane pass occupies residues 235–255 (SPFDVLEAYVCPVLFGTGSGG). Topologically, residues 256 to 295 (DHPQDNHGAWPGGPPSGALATKSKEELSEGSRKKKTKKAD) are cytoplasmic. Residues 256–295 (DHPQDNHGAWPGGPPSGALATKSKEELSEGSRKKKTKKAD) are disordered. Residues 277–286 (KSKEELSEGS) are compositionally biased toward basic and acidic residues.

The protein belongs to the TMEM38 family. In terms of assembly, homotrimer; conformation seems to be controled by binding to diacylglycerol (DAG).

Its subcellular location is the sarcoplasmic reticulum membrane. It is found in the nucleus membrane. It carries out the reaction K(+)(in) = K(+)(out). Channel activity is activated by a change of voltage within the sarcoplasmic reticulum lumen and blocked by luminal high Ca(2+) levels. In terms of biological role, intracellular monovalent cation channel required for maintenance of rapid intracellular calcium release. Acts as a potassium counter-ion channel that functions in synchronization with calcium release from intracellular stores. Opened by a change of voltage within the sarcoplasmic reticulum lumen. This chain is Trimeric intracellular cation channel type A, found in Oryctolagus cuniculus (Rabbit).